We begin with the raw amino-acid sequence, 307 residues long: Elongation factor Ts (307 aa).

An involved in Mg(2+) ion dislocation from EF-Tu region spans residues 79 to 82; sequence TDFV.

Belongs to the EF-Ts family.

Its subcellular location is the cytoplasm. Associates with the EF-Tu.GDP complex and induces the exchange of GDP to GTP. It remains bound to the aminoacyl-tRNA.EF-Tu.GTP complex up to the GTP hydrolysis stage on the ribosome. This chain is Elongation factor Ts, found in Bartonella bacilliformis (strain ATCC 35685 / KC583 / Herrer 020/F12,63).